We begin with the raw amino-acid sequence, 205 residues long: Molybdenum cofactor guanylyltransferase (205 aa).

GTP contacts are provided by residues 14 to 16 (LAG), K27, D77, and D107. D107 contributes to the Mg(2+) binding site.

The protein belongs to the MobA family. As to quaternary structure, monomer. The cofactor is Mg(2+).

The protein resides in the cytoplasm. It carries out the reaction Mo-molybdopterin + GTP + H(+) = Mo-molybdopterin guanine dinucleotide + diphosphate. Functionally, transfers a GMP moiety from GTP to Mo-molybdopterin (Mo-MPT) cofactor (Moco or molybdenum cofactor) to form Mo-molybdopterin guanine dinucleotide (Mo-MGD) cofactor. The polypeptide is Molybdenum cofactor guanylyltransferase (Burkholderia orbicola (strain MC0-3)).